A 132-amino-acid chain; its full sequence is MADFVGSWKYGDSENMEAYLKKLGISSDMVDKILNAKPEFTFTLEGNQMTIKMVSSLKTKITTFTFGEEFKEETADGKTAMTTVTKDSESKMTQVTTGPEYTTHVVREVVGDKMIATWTVGDVKAVTTLLKA.

The residue at position 2 (Ala2) is an N-acetylalanine.

Belongs to the calycin superfamily. Fatty-acid binding protein (FABP) family.

The sequence is that of Fatty acid-binding protein 1 (FABP-1) from Fasciola gigantica (Giant liver fluke).